The primary structure comprises 290 residues: 33 kDa chaperonin (290 aa).

2 disulfides stabilise this stretch: C235/C237 and C268/C271.

This sequence belongs to the HSP33 family. Post-translationally, under oxidizing conditions two disulfide bonds are formed involving the reactive cysteines. Under reducing conditions zinc is bound to the reactive cysteines and the protein is inactive.

It localises to the cytoplasm. Functionally, redox regulated molecular chaperone. Protects both thermally unfolding and oxidatively damaged proteins from irreversible aggregation. Plays an important role in the bacterial defense system toward oxidative stress. This chain is 33 kDa chaperonin, found in Streptococcus pneumoniae (strain P1031).